The chain runs to 336 residues: Mitochondrial thiamine diphosphate carrier 2 (336 aa).

6 helical membrane passes run 11–27 (RRAL…GGIS), 88–105 (VPAL…FTVL), 127–150 (YLSY…FDLL), 182–199 (LYSG…YAGL), 230–246 (SVSS…AGTF), and 303–322 (GLFP…FVAY). Solcar repeat units lie at residues 11–111 (RRAL…LKTF), 124–210 (LSPY…FKRS), and 231–328 (VSSF…ISDW).

This sequence belongs to the mitochondrial carrier (TC 2.A.29) family. Ubiquitous.

Its subcellular location is the mitochondrion inner membrane. Mitochondrial transporter that mediates uptake of thiamine diphosphate (ThDP) into mitochondria. This Zea mays (Maize) protein is Mitochondrial thiamine diphosphate carrier 2.